A 2254-amino-acid polypeptide reads, in one-letter code: Genome polyprotein (2254 aa).

Residues 438–592 (QTTINELAQL…EQWLVDNPGR (155 aa)) form the SF3 helicase domain. An ATP-binding site is contributed by 464 to 471 (GPPGIGKT). The residue at position 956 (tyrosine 956) is an O-(5'-phospho-RNA)-tyrosine. The 156-residue stretch at 1041–1196 (GDTYDSEGRG…KKLVSRVQTK (156 aa)) folds into the Peptidase C24 domain. Catalysis depends on for 3CLpro activity residues histidine 1078, aspartate 1099, and cysteine 1163. Residues 1434–1559 (RVLYCLDYSK…GLTPATASIM (126 aa)) form the RdRp catalytic domain. A disordered region spans residues 1714–1742 (PAPTRSVASNPEGTQNSNESRPVQPAGPM). A compositionally biased stretch (polar residues) spans 1719–1734 (SVASNPEGTQNSNESR).

Homodimer. Homomultimer. As to quaternary structure, interacts with host IEF4E; this interaction plays a role in translation of viral proteins. Specific enzymatic cleavages in vivo yield mature proteins. Pro-Pol is first autocatalytically cleaved, then processes the whole polyprotein. In terms of processing, VPg is uridylylated by the polymerase and is covalently attached to the 5'-end of the polyadenylated genomic and subgenomic RNAs. This uridylylated form acts as a nucleotide-peptide primer for the polymerase.

The protein localises to the virion. It is found in the host cytoplasm. The enzyme catalyses a ribonucleoside 5'-triphosphate + H2O = a ribonucleoside 5'-diphosphate + phosphate + H(+). It catalyses the reaction RNA(n) + a ribonucleoside 5'-triphosphate = RNA(n+1) + diphosphate. It carries out the reaction Endopeptidase with a preference for cleavage when the P1 position is occupied by Glu-|-Xaa and the P1' position is occupied by Gly-|-Yaa.. In terms of biological role, together with NTPase and NS4, initiates the formation of the replication complex. Induces the proliferation of the host smooth ER membranes forming long tubular structures. These remodeled membranes probably form the viral factories that contain the replication complex. Its function is as follows. Displays NTPase activity, but no helicase activity. Induces the formation of convoluted membranes derived from the host ER. These remodeled membranes probably form the viral factories that contain the replication complex. Together with NS2 and NS4, initiates the formation of the replication complex. Functionally, probable key protein responsible for the formation of membrane alterations by the virus. Induces the formation of convoluted membranes derived from the host ER. These remodeled membranes probably form the viral factories that contain the replication complex. Together with NS2 and NTPase, initiates the formation of the replication complex. Viral genome-linked protein is covalently linked to the 5'-end of the positive-strand, negative-strand genomic RNAs and subgenomic RNA. Acts as a genome-linked replication primer. May recruit ribosome to viral RNA thereby promoting viral proteins translation. Interacts with host translation initiation complex to allow the translation of viral proteins. In terms of biological role, protease-polymerase p76 processes the polyprotein: Pro-Pol is first released by autocleavage, then all other proteins are cleaved. Cleaves host translation initiation factor eIF4G1, eIF4G2 and PABP1 thereby inducing a shutdown of host protein synthesis. This shutdown may not prevent viral mRNA from being translated since viral Vpg replaces the cap. It is also an RNA-directed RNA polymerase which replicates genomic and antigenomic viral RNA by recognizing specific signals. Also transcribes a subgenomic mRNA by initiating RNA synthesis internally on antigenomic RNA. This sgRNA codes for structural proteins. Catalyzes the covalent attachment VPg with viral RNAs. Its function is as follows. Capsid protein self assembles to form an icosahedral capsid with a T=3 symmetry, about 38 nm in diameter, and consisting of 180 capsid proteins. The capsid encapsulate the genomic RNA and VP2 proteins. Attaches virion to target cells, inducing endocytosis of the viral particle. Acidification of the endosome induces conformational change of capsid protein thereby injecting virus genomic RNA into host cytoplasm. The polypeptide is Genome polyprotein (Porcine enteric sapovirus (isolate Swine/United States/Cowden/1980) (Sw/SV/Cowden/1980/US)).